The sequence spans 65 residues: MPDVKCVCCKEGNECACTGQDCCTIGKCCKDGTCCGKCSNAACKTCADGCTCGSGCSCTEGNCPC.

This sequence belongs to the metallothionein superfamily. Type 4 family.

Functionally, metallothioneins have a high content of cysteine residues that bind various heavy metals. The polypeptide is Metallothionein-B (MTB1) (Strongylocentrotus purpuratus (Purple sea urchin)).